Consider the following 272-residue polypeptide: Regulatory factor X-associated protein (272 aa).

3 disordered regions span residues 1 to 20, 74 to 142, and 175 to 195; these read MEAQGVAEGAGPGAASGVPH, LCEG…KTCT, and KKKKSDQALNCGGTASTGSAG. Positions 79–94 are enriched in acidic residues; it reads GDGEEEAGEDEADLLD. The Nuclear localization signal signature appears at 163-178; that stretch reads KKHRNKMYKDKYKKKK. A Glycyl lysine isopeptide (Lys-Gly) (interchain with G-Cter in SUMO2) cross-link involves residue lysine 198. The interval 214 to 270 is C-terminal domain; that stretch reads TGSFGDRPARPTLLEQVLNQKRLSLLRSPEVVQFLQKQQQLLNQQVLEQRQQQFPGT.

In terms of assembly, the RFX heterotetrameric complex consists of 2 molecules of RFX5 and one each of RFXAP and RFX-B/RFXANK; with each subunit representing a separate complementation group. RFX forms cooperative DNA binding complexes with X2BP and CBF/NF-Y. RFX associates with CIITA to form an active transcriptional complex. Phosphorylated. Ubiquitous.

The protein localises to the nucleus. Functionally, part of the RFX complex that binds to the X-box of MHC II promoters. The sequence is that of Regulatory factor X-associated protein (RFXAP) from Homo sapiens (Human).